A 203-amino-acid polypeptide reads, in one-letter code: MVSAWFVVGSPVMDSSSSPCLCLDAHTTGTIRRKKILGKARNLELGSSFTGSRIVFRLSPKRVSRIANRKSKKLLIVNEDVAGNYDDTFGDVQKQIVNYFTYKAVRTVLHQLYEMNPPQYTWFYNHIITNRPTDGKRFLRALGKESQELAERVMITRLHLYGKWIKKCDHGKIYQEISDENLALMRERLMETVIWPSDDTNSR.

The transit peptide at 1-78 directs the protein to the chloroplast; that stretch reads MVSAWFVVGS…RKSKKLLIVN (78 aa).

The protein belongs to the RbcX family. In terms of assembly, homodimer. Interacts with rbcL, atpB and RBCS-1B.

Its subcellular location is the plastid. The protein localises to the chloroplast stroma. Its function is as follows. Chaperone involved in RuBisCO assembly process. In Arabidopsis thaliana (Mouse-ear cress), this protein is Chaperonin-like RbcX protein 2, chloroplastic.